Reading from the N-terminus, the 181-residue chain is Peptidyl-tRNA hydrolase (181 aa).

Tyr14 lines the tRNA pocket. Residue His19 is the Proton acceptor of the active site. Phe60, Asn62, and Asn106 together coordinate tRNA.

The protein belongs to the PTH family. In terms of assembly, monomer.

The protein resides in the cytoplasm. It catalyses the reaction an N-acyl-L-alpha-aminoacyl-tRNA + H2O = an N-acyl-L-amino acid + a tRNA + H(+). Its function is as follows. Hydrolyzes ribosome-free peptidyl-tRNAs (with 1 or more amino acids incorporated), which drop off the ribosome during protein synthesis, or as a result of ribosome stalling. Functionally, catalyzes the release of premature peptidyl moieties from peptidyl-tRNA molecules trapped in stalled 50S ribosomal subunits, and thus maintains levels of free tRNAs and 50S ribosomes. The protein is Peptidyl-tRNA hydrolase of Campylobacter curvus (strain 525.92).